A 344-amino-acid chain; its full sequence is Uroporphyrinogen decarboxylase (344 aa).

Residues 26-30, Asp-75, Tyr-150, Ser-205, and His-323 each bind substrate; that span reads RQAGR.

The protein belongs to the uroporphyrinogen decarboxylase family. As to quaternary structure, homodimer.

The protein localises to the cytoplasm. The enzyme catalyses uroporphyrinogen III + 4 H(+) = coproporphyrinogen III + 4 CO2. It participates in porphyrin-containing compound metabolism; protoporphyrin-IX biosynthesis; coproporphyrinogen-III from 5-aminolevulinate: step 4/4. In terms of biological role, catalyzes the decarboxylation of four acetate groups of uroporphyrinogen-III to yield coproporphyrinogen-III. This Corynebacterium diphtheriae (strain ATCC 700971 / NCTC 13129 / Biotype gravis) protein is Uroporphyrinogen decarboxylase.